The following is a 288-amino-acid chain: Very-long-chain (3R)-3-hydroxyacyl-CoA dehydratase 1 (288 aa).

The tract at residues 1 to 59 is disordered; sequence MGRLTEAAAAGGGASAARSAGPPPAPLPLSSTSPGCAAAMASSEEDGTNGGASEASDER. Over 1–75 the chain is Cytoplasmic; the sequence is MGRLTEAAAA…RRLGLLATIW (75 aa). The helical transmembrane segment at 76 to 95 threads the bilayer; the sequence is LTFYNIAMTAGWLVLAIAMV. The Lumenal portion of the chain corresponds to 96-114; the sequence is RFYMEKGTHKGLYKSIQKT. Residues 115 to 131 traverse the membrane as a helical segment; the sequence is LKFFQTFALLEIVHCLI. The Cytoplasmic segment spans residues 132–141; it reads GIVPTSVLVA. The helical transmembrane segment at 142 to 159 threads the bilayer; it reads GVQVSSRIFMVWLVTHSI. Residues 160–165 lie on the Lumenal side of the membrane; it reads KPIQNE. A helical transmembrane segment spans residues 166 to 180; that stretch reads ESVVLFLVAWTVTEI. The Cytoplasmic segment spans residues 181-203; sequence TRYSFYTFSLLDHLPYFIKWARY. The helical transmembrane segment at 204 to 221 threads the bilayer; the sequence is NFFIILYPVGVAGELLTI. Active-site residues include Tyr210 and Glu217. The Lumenal portion of the chain corresponds to 222–251; the sequence is YAALPYVKKTGMFSIRLPNKYNVSFDYYYF. N-linked (GlcNAc...) asparagine glycosylation occurs at Asn243. The helical transmembrane segment at 252–269 threads the bilayer; sequence LLITMASYIPLFPQLYFH. Topologically, residues 270–288 are cytoplasmic; sequence MLRQRRKVLHGEVIVEKDD.

The protein belongs to the very long-chain fatty acids dehydratase HACD family. In terms of assembly, may interact with enzymes of the ELO family (including ELOVL1); with those enzymes that mediate condensation, the first of the four steps of the reaction cycle responsible for fatty acids elongation, may be part of a larger fatty acids elongase complex. Interacts with TECR. Post-translationally, N-glycosylated. As to expression, expressed in heart.

The protein resides in the endoplasmic reticulum membrane. It catalyses the reaction a very-long-chain (3R)-3-hydroxyacyl-CoA = a very-long-chain (2E)-enoyl-CoA + H2O. The enzyme catalyses (3R)-hydroxyhexadecanoyl-CoA = (2E)-hexadecenoyl-CoA + H2O. It carries out the reaction (3R)-hydroxyoctadecanoyl-CoA = (2E)-octadecenoyl-CoA + H2O. The catalysed reaction is (3R)-hydroxyeicosanoyl-CoA = (2E)-eicosenoyl-CoA + H2O. It catalyses the reaction (3R)-hydroxydocosanoyl-CoA = (2E)-docosenoyl-CoA + H2O. The enzyme catalyses (3R)-hydroxytetracosanoyl-CoA = (2E)-tetracosenoyl-CoA + H2O. It carries out the reaction (3R)-hydroxyhexacosanoyl-CoA = (2E)-hexacosenoyl-CoA + H2O. It functions in the pathway lipid metabolism; fatty acid biosynthesis. Catalyzes the third of the four reactions of the long-chain fatty acids elongation cycle. This endoplasmic reticulum-bound enzymatic process, allows the addition of two carbons to the chain of long- and very long-chain fatty acids/VLCFAs per cycle. This enzyme catalyzes the dehydration of the 3-hydroxyacyl-CoA intermediate into trans-2,3-enoyl-CoA, within each cycle of fatty acid elongation. Thereby, it participates in the production of VLCFAs of different chain lengths that are involved in multiple biological processes as precursors of membrane lipids and lipid mediators. The protein is Very-long-chain (3R)-3-hydroxyacyl-CoA dehydratase 1 (HACD1) of Ovis aries (Sheep).